The primary structure comprises 230 residues: Uracil-DNA glycosylase (230 aa).

Catalysis depends on aspartate 70, which acts as the Proton acceptor.

Belongs to the uracil-DNA glycosylase (UDG) superfamily. UNG family.

Its subcellular location is the cytoplasm. It catalyses the reaction Hydrolyzes single-stranded DNA or mismatched double-stranded DNA and polynucleotides, releasing free uracil.. In terms of biological role, excises uracil residues from the DNA which can arise as a result of misincorporation of dUMP residues by DNA polymerase or due to deamination of cytosine. This chain is Uracil-DNA glycosylase, found in Pseudomonas syringae pv. tomato (strain ATCC BAA-871 / DC3000).